The primary structure comprises 354 residues: Guanine nucleotide-binding protein alpha-16 subunit (354 aa).

Glycine 2 is lipidated: N-myristoyl glycine. Cysteine 3 is lipidated: S-palmitoyl cysteine. A G-alpha domain is found at 31–354; that stretch reads KTVKLLLLGA…RDNLRTCGLY (324 aa). Positions 34 to 47 are G1 motif; it reads KLLLLGAGESGKST. Residues 39-46, 174-180, 199-203, 268-271, and alanine 326 contribute to the GTP site; these read GAGESGKS, LRTRIKT, DVGGQ, and NKKD. Positions 46 and 180 each coordinate Mg(2+). Residues 172–180 are G2 motif; that stretch reads DVLRTRIKT. The segment at 195–204 is G3 motif; the sequence is FVVFDVGGQR. Residues 264–271 are G4 motif; sequence ILFLNKKD. Residues 324-329 are G5 motif; the sequence is TCATDT.

This sequence belongs to the G-alpha family. In terms of assembly, g proteins are composed of 3 units; alpha, beta and gamma. The alpha chain contains the guanine nucleotide binding site.

In terms of biological role, guanine nucleotide-binding proteins (G proteins) are involved as modulators or transducers in various transmembrane signaling systems. In the 1-cell embryo, probably together with goa-1, controls nuclear rotation and spindle elongation during mitosis. During the first embryonic cell divisons, plays a role in gpr-1/2 cortical localization and in the proper orientation of EMS blastomere mitotic spindle. In Caenorhabditis briggsae, this protein is Guanine nucleotide-binding protein alpha-16 subunit (gpa-16).